Reading from the N-terminus, the 638-residue chain is Sodium- and chloride-dependent glycine transporter 1 (638 aa).

The disordered stretch occupies residues 1 to 30 (MAVAHGPVATSSPEQNGAVPSEATKKDQNL). The Cytoplasmic portion of the chain corresponds to 1–40 (MAVAHGPVATSSPEQNGAVPSEATKKDQNLTRGNWGNQIE). Helical transmembrane passes span 41–61 (FVLT…FPYL), 68–88 (GAFM…LFFM), and 120–140 (VSTY…YYFF). At 141–217 (SSMTHVLPWA…LSDDIGDFGE (77 aa)) the chain is on the extracellular side. Asn-169, Asn-172, Asn-182, and Asn-188 each carry an N-linked (GlcNAc...) asparagine glycan. 9 helical membrane passes run 218-238 (VRLP…LCLI), 247-267 (VVYF…VRGV), 292-312 (VWGD…GGLI), 339-359 (SVYA…HLGV), 382-402 (LLPI…LLGL), 438-458 (VAGF…WLLL), 462-482 (YAAS…IMYI), 502-522 (LFFQ…ILIF), and 542-562 (VAIG…YALF). Topologically, residues 563 to 638 (QLCRTDGDTL…GSSRLQDSRI (76 aa)) are cytoplasmic. Residue Thr-603 is modified to Phosphothreonine. Phosphoserine occurs at positions 605 and 630. Residues 627–638 (SNGSSRLQDSRI) form an essential for interaction with EXOC1 region.

Belongs to the sodium:neurotransmitter symporter (SNF) (TC 2.A.22) family. SLC6A9 subfamily. Interacts with EXOC1; interaction increases the transporter capacity of SLC6A9 probably by promoting its insertion into the cell membrane. Interacts with EXOC3 and EXOC4. Found only in the white matter of the CNS. As to expression, found in the gray matter of CNS as well as in macrophages and mast cells in peripheral tissues.

It is found in the cell membrane. The enzyme catalyses glycine(out) + chloride(out) + 2 Na(+)(out) = glycine(in) + chloride(in) + 2 Na(+)(in). Inhibited by sarcosine. Its function is as follows. Sodium- and chloride-dependent glycine transporter. Essential for regulating glycine concentrations at inhibitory glycinergic synapses. The sequence is that of Sodium- and chloride-dependent glycine transporter 1 (Slc6a9) from Rattus norvegicus (Rat).